An 83-amino-acid chain; its full sequence is Apolipoprotein C-I, acidic form (83 aa).

Residues 1–26 (MRLFLSLPVLVVVLSMVLEGPAPAQG) form the signal peptide.

It belongs to the apolipoprotein C1 family.

The protein resides in the secreted. Functionally, inhibitor of lipoprotein binding to the low density lipoprotein (LDL) receptor, LDL receptor-related protein, and very low density lipoprotein (VLDL) receptor. Associates with high density lipoproteins (HDL) and the triacylglycerol-rich lipoproteins in the plasma and makes up about 10% of the protein of the VLDL and 2% of that of HDL. Appears to interfere directly with fatty acid uptake and is also the major plasma inhibitor of cholesteryl ester transfer protein (CETP). Binds free fatty acids and reduces their intracellular esterification. Modulates the interaction of APOE with beta-migrating VLDL and inhibits binding of beta-VLDL to the LDL receptor-related protein. The sequence is that of Apolipoprotein C-I, acidic form (APOC1A) from Pongo abelii (Sumatran orangutan).